Here is a 504-residue protein sequence, read N- to C-terminus: Maturase K (504 aa).

This sequence belongs to the intron maturase 2 family. MatK subfamily.

It is found in the plastid. The protein resides in the chloroplast. Functionally, usually encoded in the trnK tRNA gene intron. Probably assists in splicing its own and other chloroplast group II introns. The protein is Maturase K of Amaranthus caudatus (Love-lies-bleeding).